The following is a 149-amino-acid chain: Large ribosomal subunit protein bL9 (149 aa).

This sequence belongs to the bacterial ribosomal protein bL9 family.

Functionally, binds to the 23S rRNA. The sequence is that of Large ribosomal subunit protein bL9 from Haemophilus ducreyi (strain 35000HP / ATCC 700724).